The chain runs to 355 residues: Anthranilate phosphoribosyltransferase (355 aa).

5-phospho-alpha-D-ribose 1-diphosphate-binding positions include Gly85, 88-89 (GD), Thr93, 95-98 (NIST), 113-121 (KHGNRAASS), and Ser125. Gly85 is a binding site for anthranilate. Residue Ser97 participates in Mg(2+) binding. Asn116 contributes to the anthranilate binding site. Arg171 contributes to the anthranilate binding site. 2 residues coordinate Mg(2+): Asp229 and Glu230.

This sequence belongs to the anthranilate phosphoribosyltransferase family. As to quaternary structure, homodimer. Requires Mg(2+) as cofactor.

The enzyme catalyses N-(5-phospho-beta-D-ribosyl)anthranilate + diphosphate = 5-phospho-alpha-D-ribose 1-diphosphate + anthranilate. It participates in amino-acid biosynthesis; L-tryptophan biosynthesis; L-tryptophan from chorismate: step 2/5. Functionally, catalyzes the transfer of the phosphoribosyl group of 5-phosphorylribose-1-pyrophosphate (PRPP) to anthranilate to yield N-(5'-phosphoribosyl)-anthranilate (PRA). In Acidothermus cellulolyticus (strain ATCC 43068 / DSM 8971 / 11B), this protein is Anthranilate phosphoribosyltransferase.